The primary structure comprises 418 residues: Imidazolonepropionase (418 aa).

Fe(3+) contacts are provided by H80 and H82. 2 residues coordinate Zn(2+): H80 and H82. R89, Y152, and H185 together coordinate 4-imidazolone-5-propanoate. Y152 is a binding site for N-formimidoyl-L-glutamate. H250 is a binding site for Fe(3+). H250 is a Zn(2+) binding site. Q253 provides a ligand contact to 4-imidazolone-5-propanoate. A Fe(3+)-binding site is contributed by D325. D325 is a binding site for Zn(2+). N327 and G329 together coordinate N-formimidoyl-L-glutamate. S330 lines the 4-imidazolone-5-propanoate pocket.

The protein belongs to the metallo-dependent hydrolases superfamily. HutI family. It depends on Zn(2+) as a cofactor. The cofactor is Fe(3+).

It is found in the cytoplasm. The catalysed reaction is 4-imidazolone-5-propanoate + H2O = N-formimidoyl-L-glutamate. It functions in the pathway amino-acid degradation; L-histidine degradation into L-glutamate; N-formimidoyl-L-glutamate from L-histidine: step 3/3. In terms of biological role, catalyzes the hydrolytic cleavage of the carbon-nitrogen bond in imidazolone-5-propanoate to yield N-formimidoyl-L-glutamate. It is the third step in the universal histidine degradation pathway. This Solibacter usitatus (strain Ellin6076) protein is Imidazolonepropionase.